We begin with the raw amino-acid sequence, 409 residues long: Phosphoglycerate kinase (409 aa).

Residues 23 to 25, 63 to 66, arginine 120, and arginine 160 contribute to the substrate site; these read DIN and HQSR. ATP-binding positions include glutamate 333 and 359–362; that span reads GGHL.

Belongs to the phosphoglycerate kinase family. In terms of assembly, monomer.

The protein resides in the cytoplasm. It carries out the reaction (2R)-3-phosphoglycerate + ATP = (2R)-3-phospho-glyceroyl phosphate + ADP. Its pathway is carbohydrate degradation; glycolysis; pyruvate from D-glyceraldehyde 3-phosphate: step 2/5. The chain is Phosphoglycerate kinase (pgk) from Methanobacterium bryantii.